The sequence spans 830 residues: MKTPTRVSFEKKIHTPPSGDRDAERSPPKKFLRGLSGKVFRKTPEFKKQQMPTFGYIEESQFTPNLGLMMSKRGNIPKPLNLSKPISPPPSLKKTAGSVASGFSKTGQLSALQSPVNITSSNKYNIKATNLTTSLLRESISDSTTMCDTLSDINLTVMDEDYRIDGDSYYEEDSPTFMISLERNIKKCNSQFSPKRYIGEKCLICEESISSTFTGEKVVESTCSHTSHYNCYLMLFETLYFQGKFPECKICGEVSKPKDKDIVPEMVSKLLTGAGAHDDGPSSNMQQQWIDLKTARSFTGEFPQFTPQEQLIRTADISCDGFRTPRLSNSNQFEAVSYLDSPFLNSPFVNKMATTDPFDLSDDEKLDCDDEIDESAAEVWFSKTGGEHVMVSVKFQEMRTSDDLGVLQDVNHVDHEELEEREKEWKKKIDQYIETNVDKDSEFGSLILFDKLMYSDDGEQWVDNNLVILFSKFLVLFDFEEMKILGKIPRDQFYQVIKFNEDVLLCSLKSTNIPEIYLRFNENCEKWLLPKWKYCLENSSLETLPLSEIVSTVKELSHVNIIGALGAPPDVISAQSHDSRLPWKRLHSDTPLKLIVCLNLSHADGELYRKRVLKSVHQILDGLNTDDLLGIVVVGRDGSGVVGPFGTFIGMINKNWDGWTTFLDNLEVVNPNVFRDEKQQYKVTLQTCERLASTSAYVDTDDHIATGYAKQILVLNGSDVVDIEHDQKLKKAFDQLSYHWRYEISQRRMTPLNASIKQFLEELHTKRYLDVTLRLPQATFEQVYLGDMAAGEQKTRLIMDEHPHSSLIEIEYFDLVKQQRIHQTLEVPNL.

The disordered stretch occupies residues 1–31 (MKTPTRVSFEKKIHTPPSGDRDAERSPPKKF). Basic and acidic residues predominate over residues 8–27 (SFEKKIHTPPSGDRDAERSP). S87 carries the post-translational modification Phosphoserine; by CDC28. Phosphoserine occurs at positions 110 and 114. An RING-type zinc finger spans residues 202–252 (CLICEESISSTFTGEKVVESTCSHTSHYNCYLMLFETLYFQGKFPECKICG). T306 carries the post-translational modification Phosphothreonine.

As to quaternary structure, associates with the CDC28-CLN complex. Post-translationally, thought to be phosphorylated by MAP kinase FUS3. Thought to enhance the binding of FAR1 to G1-specific cyclin-dependent kinase (CDK) complexes.

Functionally, inhibitor of the cyclin-dependent kinase CDC28. Necessary for cell cycle arrest. Involved in pheromone response. Contributes to mating efficiency. Required for oriented polarization of yeast cells in response to mating pheromones. This is Cyclin-dependent kinase inhibitor FAR1 (FAR1) from Saccharomyces cerevisiae (strain ATCC 204508 / S288c) (Baker's yeast).